A 459-amino-acid chain; its full sequence is Fibrous sheath-interacting protein 1 (459 aa).

The disordered stretch occupies residues 1 to 54 (MDITKGSLDEIARPASSSRSRPGSRVSTSLSTEKPKRSSTSLSLEILNPEPGFS). Over residues 13–29 (RPASSSRSRPGSRVSTS) the composition is skewed to low complexity. Residues 162–202 (KMERAIKRMQALDDILQRKLAKEKEVKAQGLEIRIKLWEEL) are a coiled coil. The segment at 252–289 (QLPNEDPVEDDDHKTLQGNMTGADSSDRSDCKTRHSKG) is disordered. Positions 276–289 (SSDRSDCKTRHSKG) are enriched in basic and acidic residues.

Belongs to the FSIP1 family.

The sequence is that of Fibrous sheath-interacting protein 1 (fsip1) from Xenopus laevis (African clawed frog).